The sequence spans 2542 residues: Unconventional myosin-IXa (2542 aa).

One can recognise a Ras-associating domain in the interval 14 to 112 (NEHTLRIYPG…YRFLLREKNL (99 aa)). Residues 146-1017 (KDFDDLCSLP…ERQHLQDLLH (872 aa)) form the Myosin motor domain. Residues 175–195 (IYTYVGSILIAINPFKFLPIY) traverse the membrane as a helical segment. 239–246 (GESGSGKT) contributes to the ATP binding site. A Phosphoserine modification is found at Ser-755. The actin-binding stretch occupies residues 908 to 919 (QAEPYFVKCIRS). IQ domains are found at residues 1021–1041 (LRRI…QQFL), 1043–1072 (LRQA…EKDA), 1075–1104 (MASA…AAVI), 1116–1145 (RHKA…KIIL), and 1139–1168 (QRNK…EKLR). The segment at 1022–1163 (RRIVLLQRWF…RARQRCNALK (142 aa)) is neck or regulatory domain. Residues 1164 to 2505 (EEKLREAKLE…LKNVKNSPQK (1342 aa)) form a tail region. The segment covering 1221 to 1240 (RESSMDFSKESPDKQQERGR) has biased composition (basic and acidic residues). The interval 1221-1276 (RESSMDFSKESPDKQQERGRRQSGTDLQEDVIVRQRPKSLEDLHQKKVGRAKRESR) is disordered. At Ser-1243 the chain carries Phosphoserine. Position 1245 is a phosphothreonine (Thr-1245). A Phosphoserine modification is found at Ser-1259. Residues 1265–1292 (QKKVGRAKRESRRMRELEQAIFSLELLK) adopt a coiled-coil conformation. A compositionally biased stretch (basic residues) spans 1266–1276 (KKVGRAKRESR). Residues Ser-1300 and Ser-1318 each carry the phosphoserine modification. A disordered region spans residues 1342-1401 (KSKPESLILDEGELKISSPNTFTNPKSQDNALSASSETSSTLAGKGASSDSEHLKNGTAK). The segment covering 1358–1371 (SSPNTFTNPKSQDN) has biased composition (polar residues). Residues 1372-1384 (ALSASSETSSTLA) are compositionally biased toward low complexity. Residues 1391 to 1401 (DSEHLKNGTAK) are compositionally biased toward basic and acidic residues. A coiled-coil region spans residues 1492 to 1539 (TVLKKLEKLNIEKEKRQKQLQQQNEKEMMEQIRQQTDILEKERKAFKT). Disordered regions lie at residues 1650 to 1675 (RSTE…REGS), 1693 to 1727 (SGNP…SVDE), 1767 to 1793 (GKQG…PGPD), and 1806 to 1841 (QYHP…KRGV). Residues 1665 to 1675 (HRSDDPSREGS) are compositionally biased toward basic and acidic residues. Residues 1715–1726 (QQETSQRFSSVD) are compositionally biased toward polar residues. Residues 1821–1833 (CRKEFKENKEPSP) are compositionally biased toward basic and acidic residues. Position 1950 is a phosphoserine (Ser-1950). 2 Phorbol-ester/DAG-type zinc fingers span residues 2001-2050 (GHIF…TAKC) and 2068-2119 (SRLT…DTDA). The Rho-GAP domain occupies 2065–2253 (VELSRLTSED…LIVVEQMNKY (189 aa)). Phosphoserine occurs at positions 2293 and 2296. Residues 2324–2360 (TDQQQAAMQQEEKVLTEQIENLQKEKEELTFEMLVLE) are a coiled coil. The interval 2361–2443 (PRASDDETLE…NTTSSHGTRK (83 aa)) is disordered. Residues 2377–2386 (TADSSENLNM) show a composition bias toward polar residues. Low complexity predominate over residues 2420–2438 (SLDSVSSSVSSCLSNTTSS). Phosphoserine is present on Ser-2458. Positions 2465-2530 (TEGPLGQAKS…TVDSDCSSTQ (66 aa)) are disordered.

Belongs to the TRAFAC class myosin-kinesin ATPase superfamily. Myosin family. Post-translationally, phosphorylated by ALPK1 following monosodium urate monohydrate (MSU)-induced inflammation. Expressed in the eye, lung, liver, brain, heart, kidney, skeletal muscle and spleen. No detection was found in liver. In the brain, expressed in the ependymal cells of the third ventricle and the aqueduct.

It is found in the membrane. The protein localises to the cytoplasm. The protein resides in the synapse. Its subcellular location is the cell projection. It localises to the growth cone. Functionally, myosins are actin-based motor molecules with ATPase activity. Unconventional myosins serve in intracellular movements. Regulates Rho by stimulating it's GTPase activity in neurons. Required for the regulation of neurite branching and motor neuron axon guidance. The protein is Unconventional myosin-IXa (Myo9a) of Mus musculus (Mouse).